We begin with the raw amino-acid sequence, 338 residues long: tRNA pseudouridine synthase D (338 aa).

The active-site Nucleophile is the Asp-79. Residues Gly-154–Tyr-303 form the TRUD domain.

Belongs to the pseudouridine synthase TruD family.

It carries out the reaction uridine(13) in tRNA = pseudouridine(13) in tRNA. In terms of biological role, responsible for synthesis of pseudouridine from uracil-13 in transfer RNAs. This Legionella pneumophila (strain Corby) protein is tRNA pseudouridine synthase D.